A 422-amino-acid chain; its full sequence is Cytochrome P450-pinF1, plant-inducible (422 aa).

Cysteine 369 is a heme binding site.

The protein belongs to the cytochrome P450 family. The cofactor is heme.

In terms of biological role, not essential for virulence, but may be involved in the detoxification of plant protective agents at the site of wounding. This is Cytochrome P450-pinF1, plant-inducible (cyp103) from Rhizobium radiobacter (Agrobacterium tumefaciens).